The following is a 276-amino-acid chain: Large ribosomal subunit protein uL2 (276 aa).

A disordered region spans residues 224–276 (AMNPIDHPHGGGEGKTSGGRNPVTPWGVSTKGKKTRKKNKSSNKYIKRVSDKG). Residues 254–270 (KGKKTRKKNKSSNKYIK) are compositionally biased toward basic residues.

It belongs to the universal ribosomal protein uL2 family. As to quaternary structure, part of the 50S ribosomal subunit. Forms a bridge to the 30S subunit in the 70S ribosome.

Its function is as follows. One of the primary rRNA binding proteins. Required for association of the 30S and 50S subunits to form the 70S ribosome, for tRNA binding and peptide bond formation. It has been suggested to have peptidyltransferase activity; this is somewhat controversial. Makes several contacts with the 16S rRNA in the 70S ribosome. The sequence is that of Large ribosomal subunit protein uL2 from Ehrlichia ruminantium (strain Gardel).